The primary structure comprises 137 residues: Small ribosomal subunit protein bS18c (137 aa).

The protein belongs to the bacterial ribosomal protein bS18 family. In terms of assembly, part of the 30S ribosomal subunit.

The protein localises to the plastid. It is found in the chloroplast. This chain is Small ribosomal subunit protein bS18c (rps18), found in Chlamydomonas reinhardtii (Chlamydomonas smithii).